Reading from the N-terminus, the 527-residue chain is Bifunctional purine biosynthesis protein PurH (527 aa).

Residues 1–149 (MASDFLPVRR…KNFARVAVAT (149 aa)) enclose the MGS-like domain.

The protein belongs to the PurH family.

It carries out the reaction (6R)-10-formyltetrahydrofolate + 5-amino-1-(5-phospho-beta-D-ribosyl)imidazole-4-carboxamide = 5-formamido-1-(5-phospho-D-ribosyl)imidazole-4-carboxamide + (6S)-5,6,7,8-tetrahydrofolate. It catalyses the reaction IMP + H2O = 5-formamido-1-(5-phospho-D-ribosyl)imidazole-4-carboxamide. Its pathway is purine metabolism; IMP biosynthesis via de novo pathway; 5-formamido-1-(5-phospho-D-ribosyl)imidazole-4-carboxamide from 5-amino-1-(5-phospho-D-ribosyl)imidazole-4-carboxamide (10-formyl THF route): step 1/1. It participates in purine metabolism; IMP biosynthesis via de novo pathway; IMP from 5-formamido-1-(5-phospho-D-ribosyl)imidazole-4-carboxamide: step 1/1. The polypeptide is Bifunctional purine biosynthesis protein PurH (Xanthomonas oryzae pv. oryzae (strain MAFF 311018)).